The sequence spans 487 residues: Cysteine--tRNA ligase (487 aa).

Residue cysteine 29 coordinates Zn(2+). The short motif at 31–41 (VTVYDVNHVGH) is the 'HIGH' region element. 3 residues coordinate Zn(2+): cysteine 209, histidine 234, and glutamate 238. The 'KMSKS' region signature appears at 266-270 (KMSKS). Residue lysine 269 coordinates ATP.

Belongs to the class-I aminoacyl-tRNA synthetase family. As to quaternary structure, monomer. Requires Zn(2+) as cofactor.

The protein resides in the cytoplasm. It catalyses the reaction tRNA(Cys) + L-cysteine + ATP = L-cysteinyl-tRNA(Cys) + AMP + diphosphate. The sequence is that of Cysteine--tRNA ligase from Persephonella marina (strain DSM 14350 / EX-H1).